The primary structure comprises 404 residues: MRTPMSDTQHVQSSLVSIRSSDKIEDAFRKMKVNETGVEELNPYPDRPGERDCQFYLRTGLCGYGSSCRYNHPTHLPQDVAYYKEELPERIGQPDCEYFLKTGACKYGPTCKYHHPKDRNGAQPVMFNVIGLPMRLGEKPCPYYLRTGTCRFGVACKFHHPQPDNGHSTAYGMSSFPAADLRYASGLTMMSTYGTLPRPQVPQSYVPILVSPSQGFLPPQGWAPYMAASNSMYNVKNQPYYSGSSASMAMAVALNRGLSESSDQPECRFFMNTGTCKYGDDCKYSHPGVRISQPPPSLINPFVLPARPGQPACGNFRSYGFCKFGPNCKFDHPMLPYPGLTMATSLPTPFASPVTTHQRISPTPNRSDSKSLSNGKPDVKKESSETEKPDNGEVQDLSEDASSP.

C3H1-type zinc fingers lie at residues Arg-47–His-75, Arg-90–Asp-118, Arg-135–Pro-163, Ser-261–Val-289, and Arg-307–Leu-335. Over residues Phe-350–Asn-374 the composition is skewed to polar residues. Residues Phe-350 to Pro-404 are disordered. A compositionally biased stretch (basic and acidic residues) spans Pro-377–Asn-391.

The protein localises to the nucleus. Its function is as follows. Possesses RNA-binding and ribonuclease activities in vitro. The polypeptide is Zinc finger CCCH domain-containing protein 3 (Arabidopsis thaliana (Mouse-ear cress)).